Here is a 475-residue protein sequence, read N- to C-terminus: Ribulose bisphosphate carboxylase large chain (475 aa).

The propeptide occupies 1-2 (MS). Pro-3 is subject to N-acetylproline. At Lys-14 the chain carries N6,N6,N6-trimethyllysine. The substrate site is built by Asn-123 and Thr-173. Lys-175 serves as the catalytic Proton acceptor. Lys-177 lines the substrate pocket. Mg(2+)-binding residues include Lys-201, Asp-203, and Glu-204. The residue at position 201 (Lys-201) is an N6-carboxylysine. Catalysis depends on His-294, which acts as the Proton acceptor. The substrate site is built by Arg-295, His-327, and Ser-379.

Belongs to the RuBisCO large chain family. Type I subfamily. As to quaternary structure, heterohexadecamer of 8 large chains and 8 small chains; disulfide-linked. The disulfide link is formed within the large subunit homodimers. The cofactor is Mg(2+). Post-translationally, the disulfide bond which can form in the large chain dimeric partners within the hexadecamer appears to be associated with oxidative stress and protein turnover.

The protein localises to the plastid. It is found in the chloroplast. It catalyses the reaction 2 (2R)-3-phosphoglycerate + 2 H(+) = D-ribulose 1,5-bisphosphate + CO2 + H2O. The catalysed reaction is D-ribulose 1,5-bisphosphate + O2 = 2-phosphoglycolate + (2R)-3-phosphoglycerate + 2 H(+). Its function is as follows. RuBisCO catalyzes two reactions: the carboxylation of D-ribulose 1,5-bisphosphate, the primary event in carbon dioxide fixation, as well as the oxidative fragmentation of the pentose substrate in the photorespiration process. Both reactions occur simultaneously and in competition at the same active site. This is Ribulose bisphosphate carboxylase large chain from Calycanthus floridus var. glaucus (Eastern sweetshrub).